The primary structure comprises 444 residues: Enolase (444 aa).

Residues histidine 163 and glutamate 172 each contribute to the substrate site. Glutamate 215 acts as the Proton donor in catalysis. Mg(2+) contacts are provided by aspartate 250, glutamate 300, and aspartate 327. 2 residues coordinate substrate: glutamate 300 and aspartate 327. The Proton acceptor role is filled by lysine 352. Substrate is bound by residues 379–382 (SHRS) and lysine 403.

The protein belongs to the enolase family. Homodimer. The cofactor is Mg(2+).

The protein resides in the cytoplasm. The catalysed reaction is (2R)-2-phosphoglycerate = phosphoenolpyruvate + H2O. It functions in the pathway carbohydrate degradation; glycolysis; pyruvate from D-glyceraldehyde 3-phosphate: step 4/5. The sequence is that of Enolase (PGH1) from Solanum lycopersicum (Tomato).